The sequence spans 598 residues: uncharacterized protein (598 aa).

The segment covering 1-19 has biased composition (low complexity); it reads MSVPLRFSTPSSSPSASDN. Disordered regions lie at residues 1–54, 139–176, and 194–279; these read MSVP…MRPK, QKNQEARSRANSRVNSRANSRANSSVSLAGMDGSPNWK, and EAQL…ITMP. At 1-313 the chain is on the cytoplasmic side; it reads MSVPLRFSTP…CKIRHFFREG (313 aa). Over residues 30–48 the composition is skewed to polar residues; that stretch reads ELDTFNTTDVPRRVNTTKA. Residues 147–165 show a composition bias toward low complexity; it reads RANSRVNSRANSRANSSVS. Composition is skewed to polar residues over residues 218–242 and 255–276; these read FSLQSSRQPSIAEEQPQTQRKSSAI and PRNNVSFSRKPSIAEQDSSQDI. The chain crosses the membrane as a helical span at residues 314–334; the sequence is FAEFLGTLVLVVFGVGSNLQA. Residues 335–346 are Extracellular-facing; it reads TVTNGAGGSFES. A helical transmembrane segment spans residues 347–367; it reads LSFAWGFGCMLGVYIAGGISG. Over 368–388 the chain is Cytoplasmic; the sequence is GHVNPAVTISLAIFRKFPWYK. The short motif at 371 to 373 is the NPA 1 element; sequence NPA. Residues 389–409 traverse the membrane as a helical segment; sequence VPIYIFFQIWGAFFGGALAYG. The Extracellular segment spans residues 410-444; that stretch reads YHWSSITEFEGGKDIRTPATGGCLYTNPKPYVTWR. The helical transmembrane segment at 445–465 threads the bilayer; the sequence is NAFFDEFIGTAVLVGCLFAIL. Residues 466-473 lie on the Cytoplasmic side of the membrane; it reads DDTNSPPT. The chain crosses the membrane as a helical span at residues 474–494; it reads QGMTAFIVGLLIAAIGMALGY. At 495-532 the chain is on the extracellular side; the sequence is QTSFTLNPARDLGPRMFAWWIGYGPHSFHLYHWWWTWG. An NPA 2 motif is present at residues 501 to 503; the sequence is NPA. Residues 533 to 553 traverse the membrane as a helical segment; sequence AWGGTIGGGIAGGLIYDLVIF. Over 554–598 the chain is Cytoplasmic; it reads TGPESPLNYPDNGFIDKKVHQITAKFEKEEEVENLEKTDSPIENN.

Belongs to the MIP/aquaporin (TC 1.A.8) family.

The protein localises to the membrane. This is an uncharacterized protein from Schizosaccharomyces pombe (strain 972 / ATCC 24843) (Fission yeast).